The sequence spans 544 residues: Aspartokinase (544 aa).

One can recognise an ACT domain in the interval 463–535; that stretch reads LVGKQMVNFI…SAIGDSSAVD (73 aa).

The protein belongs to the aspartokinase family.

It carries out the reaction L-aspartate + ATP = 4-phospho-L-aspartate + ADP. It functions in the pathway amino-acid biosynthesis; L-methionine biosynthesis via de novo pathway; L-homoserine from L-aspartate: step 1/3. The protein operates within amino-acid biosynthesis; L-threonine biosynthesis; L-threonine from L-aspartate: step 1/5. Phosphorylates aspartate, the first step in the biosynthesis of amino acids that derive from aspartate (the aspartate family of amino acids), including methioinine and threonine, the latter of which is a precursor to isoleucine. The sequence is that of Aspartokinase from Candida albicans (strain SC5314 / ATCC MYA-2876) (Yeast).